We begin with the raw amino-acid sequence, 899 residues long: Receptor-like protein kinase At3g21340 (899 aa).

The first 27 residues, 1–27 (MEYHPQAIRLCALIFISFYALLHLVEA), serve as a signal peptide directing secretion. The Extracellular portion of the chain corresponds to 28 to 522 (QDQKGFISLD…GAKKMNVVIP (495 aa)). 10 N-linked (GlcNAc...) asparagine glycosylation sites follow: Asn-100, Asn-146, Asn-185, Asn-240, Asn-266, Asn-420, Asn-436, Asn-449, Asn-468, and Asn-475. LRR repeat units follow at residues 415 to 438 (IVTSLNLSSSHLTGIIAQGIQNLT), 439 to 461 (HLQELDLSNNNLTGGIPEFLADI), and 463 to 485 (SLLVINLSGNNFNGSIPQILLQK). A helical transmembrane segment spans residues 523–543 (IVASVAFVVVLGSALAFFFIF). Residues 544 to 899 (KKKKTSNSQD…FDIGATPDAR (356 aa)) are Cytoplasmic-facing. Thr-583 carries the phosphothreonine modification. The region spanning 592–865 (NNFERVLGKG…QVVIELNECL (274 aa)) is the Protein kinase domain. ATP contacts are provided by residues 598–606 (LGKGGFGMV) and Lys-620. Tyr-665 bears the Phosphotyrosine mark. Asp-717 (proton acceptor) is an active-site residue. Ser-751 carries the post-translational modification Phosphoserine. Thr-752 and Thr-757 each carry phosphothreonine. Tyr-765 carries the post-translational modification Phosphotyrosine.

Belongs to the protein kinase superfamily. Ser/Thr protein kinase family. Post-translationally, autophosphorylated on Tyr and Thr residues.

The protein resides in the cell membrane. It catalyses the reaction L-seryl-[protein] + ATP = O-phospho-L-seryl-[protein] + ADP + H(+). The enzyme catalyses L-threonyl-[protein] + ATP = O-phospho-L-threonyl-[protein] + ADP + H(+). It carries out the reaction L-tyrosyl-[protein] + ATP = O-phospho-L-tyrosyl-[protein] + ADP + H(+). Probable receptor with a dual specificity kinase activity acting on both serine/threonine- and tyrosine-containing substrates. In Arabidopsis thaliana (Mouse-ear cress), this protein is Receptor-like protein kinase At3g21340.